The chain runs to 745 residues: DNA ligase (745 aa).

The segment at 1-27 (MRNHGPGSERKDACVSAPDPTFSDDVP) is disordered. NAD(+) contacts are provided by residues 57–61 (DAEYD), 106–107 (SL), and Glu135. The active-site N6-AMP-lysine intermediate is the Lys137. NAD(+) is bound by residues Arg158 and Glu197. The tract at residues 216-235 (GKPPFANPRNAAAGSLRQKD) is disordered. NAD(+) contacts are provided by Lys313 and Lys337. Residues Cys431, Cys434, Cys450, and Cys456 each coordinate Zn(2+). The region spanning 649-738 (DGPRLLDGIT…PEAARAARLS (90 aa)) is the BRCT domain.

Belongs to the NAD-dependent DNA ligase family. LigA subfamily. Mg(2+) serves as cofactor. It depends on Mn(2+) as a cofactor.

The enzyme catalyses NAD(+) + (deoxyribonucleotide)n-3'-hydroxyl + 5'-phospho-(deoxyribonucleotide)m = (deoxyribonucleotide)n+m + AMP + beta-nicotinamide D-nucleotide.. DNA ligase that catalyzes the formation of phosphodiester linkages between 5'-phosphoryl and 3'-hydroxyl groups in double-stranded DNA using NAD as a coenzyme and as the energy source for the reaction. It is essential for DNA replication and repair of damaged DNA. This is DNA ligase from Thermobifida fusca (strain YX).